We begin with the raw amino-acid sequence, 330 residues long: uncharacterized protein (330 aa).

Residues Leu-4–Thr-242 enclose the ABC transporter domain. ATP is bound at residue Gly-40–Thr-47. Asp-210–Glu-330 is a binding site for a nucleoside 3',5'-cyclic phosphate.

Belongs to the ABC transporter superfamily.

This is an uncharacterized protein from Mycobacterium bovis (strain ATCC BAA-935 / AF2122/97).